The following is a 102-amino-acid chain: Large ribosomal subunit protein bL36m (102 aa).

It belongs to the bacterial ribosomal protein bL36 family. As to quaternary structure, component of the mitochondrial ribosome large subunit (39S) which comprises a 16S rRNA and about 50 distinct proteins.

The protein resides in the mitochondrion. This is Large ribosomal subunit protein bL36m (Mrpl36) from Mus musculus (Mouse).